The following is a 357-amino-acid chain: Glutamyl endopeptidase (357 aa).

Residues 1–29 (MKGKFLKVSSLFVATLTTATLVSSPAANA) form the signal peptide. Residues 30-68 (LSSKAMDNHPQQTQTDKQQTPKIQKGGNLKPLEQRERAN) constitute a propeptide that is removed on maturation. The interval 33-58 (KAMDNHPQQTQTDKQQTPKIQKGGNL) is disordered. Residues 40-54 (QQTQTDKQQTPKIQK) show a composition bias toward low complexity. Active-site charge relay system residues include H119, D161, and S237. A disordered region spans residues 282–357 (NFANDDHPNN…NNNSDNPDAA (76 aa)). A run of 18 repeats spans residues 289–291 (PNN), 292–294 (PDN), 295–297 (PDN), 298–300 (PNN), 301–303 (PDN), 304–306 (PNN), 307–309 (PDN), 310–312 (PNN), 313–315 (PDN), 316–318 (PDN), 319–321 (PNN), 322–324 (PDN), 325–327 (PNN), 328–330 (PDN), 331–333 (PNN), 337–339 (PNN), 340–342 (PNN), and 343–345 (PDN). Residues 289 to 345 (PNNPDNPDNPNNPDNPNNPDNPNNPDNPDNPNNPDNPNNPDNPNNPDQPNNPNNPDN) are 18 X 3 AA repeats of P-[DN]-N. Low complexity predominate over residues 291-357 (NPDNPDNPNN…NNNSDNPDAA (67 aa)).

This sequence belongs to the peptidase S1B family. In terms of processing, proteolytically cleaved by aureolysin (aur). This cleavage leads to the activation of SspA.

The protein localises to the secreted. The catalysed reaction is Preferential cleavage: Glu-|-Xaa, Asp-|-Xaa.. Functionally, preferentially cleaves peptide bonds on the carboxyl-terminal side of aspartate and glutamate. Along with other extracellular proteases it is involved in colonization and infection of human tissues. Required for proteolytic maturation of thiol protease SspB and inactivation of SspC, an inhibitor of SspB. It is the most important protease for degradation of fibronectin-binding protein (FnBP) and surface protein A, which are involved in adherence to host cells. May also protect bacteria against host defense mechanism by cleaving the immunoglobulin classes IgG, IgA and IgM. May be involved in the stability of secreted lipases. In Staphylococcus aureus (strain MRSA252), this protein is Glutamyl endopeptidase (sspA).